The sequence spans 92 residues: Small ribosomal subunit protein uS19c (92 aa).

This sequence belongs to the universal ribosomal protein uS19 family.

It localises to the plastid. Its subcellular location is the chloroplast. Functionally, protein S19 forms a complex with S13 that binds strongly to the 16S ribosomal RNA. This chain is Small ribosomal subunit protein uS19c (rps19), found in Glycine max (Soybean).